The chain runs to 352 residues: Gap junction alpha-4 protein (352 aa).

The Cytoplasmic segment spans residues 2–23 (GDWEFLEKLLDQVQEHSTSIGK). A helical membrane pass occupies residues 24–46 (IWLMVLFIFRILILGLAGESVWG). Over 47–76 (DEQSDFICNTEQPGCTNVCYDKAFPISHVR) the chain is Extracellular. The chain crosses the membrane as a helical span at residues 77–99 (YWVLQFLFVSTPTLFYLGHVIYL). Topologically, residues 100-153 (SRREEKLKQKESELRALDDKEQVEQAIAIIEKKKMKLYIQEDGTVKIKGALMCT) are cytoplasmic. Residues 154 to 176 (YLTSVIFKSLFEAGFLLGQWYLY) traverse the membrane as a helical segment. The Extracellular segment spans residues 177-208 (GFVMTPIYVCERVPCPHKVDCFVSRPMEKTIF). Residues 209–231 (IVFMLVVSLISLFLNVLELIHLV) form a helical membrane-spanning segment. Over 232 to 352 (CKSMIDTLKK…SSSASKKQYV (121 aa)) the chain is Cytoplasmic. The tract at residues 330–352 (KTHSTMEKPSTRASSSASKKQYV) is disordered. The segment covering 340–352 (TRASSSASKKQYV) has biased composition (polar residues).

The protein belongs to the connexin family. Alpha-type (group II) subfamily. As to quaternary structure, a connexon is composed of a hexamer of connexins.

Its subcellular location is the cell membrane. It localises to the cell junction. It is found in the gap junction. In terms of biological role, one gap junction consists of a cluster of closely packed pairs of transmembrane channels, the connexons, through which materials of low MW diffuse from one cell to a neighboring cell. The chain is Gap junction alpha-4 protein (gja4) from Xenopus tropicalis (Western clawed frog).